We begin with the raw amino-acid sequence, 476 residues long: Argininosuccinate lyase (476 aa).

This sequence belongs to the lyase 1 family. Argininosuccinate lyase subfamily.

It localises to the cytoplasm. The enzyme catalyses 2-(N(omega)-L-arginino)succinate = fumarate + L-arginine. It functions in the pathway amino-acid biosynthesis; L-arginine biosynthesis; L-arginine from L-ornithine and carbamoyl phosphate: step 3/3. The chain is Argininosuccinate lyase from Leptothrix cholodnii (strain ATCC 51168 / LMG 8142 / SP-6) (Leptothrix discophora (strain SP-6)).